Reading from the N-terminus, the 292-residue chain is MAAPFKTLVEDYPRYLKSFELFLERSSEHQCMQDFIHNTLPDILASIGGGRSVFNVMGVGSGAGDIDLEMLAQLHLKHPHVKVDNEVVEPSNDMLYKYKARVSTSPDLAYINFTWNKMTASEFEKQWQEKTPEKKMDFIHMIQMLYYVKDPNATVSFFRSLLEKDGKLLIILVSGESGWGKLWTTFRKQLCYTEMSQCVTIGEIKSFLDSEGVPYRKYVLLSQMDITECFTEGDQEGELLLDFLTEVKEFSKNAPERLKKEVLDVLRHPDCSKEVDGRIIFNNNLEVLVIEP.

Residue glutamate 28 coordinates substrate. 3 residues coordinate S-adenosyl-L-methionine: glycine 60, glutamate 89, and isoleucine 142. Asparagine 283 provides a ligand contact to substrate.

The protein belongs to the class I-like SAM-binding methyltransferase superfamily. HNMT family. As to quaternary structure, monomer.

Its subcellular location is the cytoplasm. It carries out the reaction histamine + S-adenosyl-L-methionine = N(tau)-methylhistamine + S-adenosyl-L-homocysteine + H(+). In terms of biological role, inactivates histamine by N-methylation. Plays an important role in degrading histamine and in regulating the airway response to histamine. The polypeptide is Histamine N-methyltransferase (hnmt) (Danio rerio (Zebrafish)).